The chain runs to 171 residues: Putative antiporter subunit mnhG2 (171 aa).

The next 3 helical transmembrane spans lie at 11-31, 51-71, and 72-92; these read IAAL…IGIV, VLLT…FFSV, and RLLL…HLVA. Basic and acidic residues predominate over residues 144–156; it reads DVQKQRQKEKQQE. The disordered stretch occupies residues 144–171; the sequence is DVQKQRQKEKQQEENIESLSEARRETKD.

This sequence belongs to the CPA3 antiporters (TC 2.A.63) subunit G family. May form a heterooligomeric complex that consists of seven subunits: mnhA2, mnhB2, mnhC2, mnhD2, mnhE2, mnhF2 and mnhG2.

The protein localises to the cell membrane. The protein is Putative antiporter subunit mnhG2 (mnhG2) of Staphylococcus haemolyticus (strain JCSC1435).